Consider the following 190-residue polypeptide: Recombination protein RecR (190 aa).

The segment at 58-73 (CTQCGGLSEDELCYIC) adopts a C4-type zinc-finger fold. Positions 81–167 (SSLCLVESAR…HFTKIAQGVP (87 aa)) constitute a Toprim domain.

It belongs to the RecR family.

In terms of biological role, may play a role in DNA repair. It seems to be involved in an RecBC-independent recombinational process of DNA repair. It may act with RecF and RecO. The chain is Recombination protein RecR from Nitratiruptor sp. (strain SB155-2).